A 590-amino-acid polypeptide reads, in one-letter code: Cell division protein FtsZ 1 (590 aa).

GTP contacts are provided by residues 24-28 (GGGGN), 111-113 (GTG), Glu142, Arg146, and Asp190. Disordered regions lie at residues 346 to 372 (AAVPAQPQPTVSLQPVPQPQPVQQPLQ) and 524 to 590 (EATN…RQSS). The segment covering 534–546 (AAAPSAASQQRRP) has biased composition (low complexity). Basic and acidic residues predominate over residues 559 to 576 (GQLDDHGRAAPQMRSHED).

It belongs to the FtsZ family. As to quaternary structure, homodimer. Polymerizes to form a dynamic ring structure in a strictly GTP-dependent manner. Interacts directly with several other division proteins.

It is found in the cytoplasm. Its function is as follows. Essential cell division protein that forms a contractile ring structure (Z ring) at the future cell division site. The regulation of the ring assembly controls the timing and the location of cell division. One of the functions of the FtsZ ring is to recruit other cell division proteins to the septum to produce a new cell wall between the dividing cells. Binds GTP and shows GTPase activity. The polypeptide is Cell division protein FtsZ 1 (Rhizobium meliloti (strain 1021) (Ensifer meliloti)).